The chain runs to 106 residues: ATP-dependent Clp protease adapter protein ClpS (106 aa).

The protein belongs to the ClpS family. Binds to the N-terminal domain of the chaperone ClpA.

In terms of biological role, involved in the modulation of the specificity of the ClpAP-mediated ATP-dependent protein degradation. The polypeptide is ATP-dependent Clp protease adapter protein ClpS (Cronobacter sakazakii (strain ATCC BAA-894) (Enterobacter sakazakii)).